The sequence spans 329 residues: Prostaglandin reductase 1 (329 aa).

Threonine 18 is modified (phosphothreonine). Serine 20 is modified (phosphoserine). NADP(+) is bound by residues 152-155, lysine 178, tyrosine 193, asparagine 217, 239-245, 270-272, and asparagine 321; these read GAVG, CGAISTY, and FVV. An N6-(2-hydroxyisobutyryl)lysine; alternate modification is found at lysine 178. An N6-acetyllysine; alternate modification is found at lysine 178.

Belongs to the NADP-dependent oxidoreductase L4BD family. In terms of assembly, monomer or homodimer. High expression in the kidney, liver, and intestine but not in leukocytes.

Its subcellular location is the cytoplasm. It carries out the reaction 13,14-dihydro-15-oxo-prostaglandin E1 + NADP(+) = 15-oxoprostaglandin E1 + NADPH + H(+). It catalyses the reaction 13,14-dihydro-15-oxo-prostaglandin E2 + NADP(+) = 15-oxoprostaglandin E2 + NADPH + H(+). The enzyme catalyses 13,14-dihydro-15-oxo-prostaglandin F1alpha + NADP(+) = 15-oxoprostaglandin F1alpha + NADPH + H(+). The catalysed reaction is 13,14-dihydro-15-oxo-PGF2alpha + NADP(+) = 15-oxoprostaglandin F2alpha + NADPH + H(+). It carries out the reaction leukotriene B4 + NADP(+) = 12-oxo-leukotriene B4 + NADPH + H(+). It catalyses the reaction 20-hydroxy-leukotriene B4 + NADP(+) = 12-oxo-20-hydroxy-leukotriene B4 + NADPH + H(+). The enzyme catalyses 6-trans-leukotriene B4 + NADP(+) = 12-oxo-(5S)-hydroxy-(6E,8E,10E,14Z)-eicosatetraenoate + NADPH + H(+). The catalysed reaction is (5S,12S)-dihydroxy-(6E,10E,12E,14Z)-eicosatetraenoate + NADP(+) = 12-oxo-(5S)-hydroxy-(6E,8E,10E,14Z)-eicosatetraenoate + NADPH + H(+). It carries out the reaction an n-alkanal + NADP(+) = an alk-2-enal + NADPH + H(+). It catalyses the reaction hexanal + NADP(+) = (E)-hex-2-enal + NADPH + H(+). The enzyme catalyses octanal + NADP(+) = (2E)-octenal + NADPH + H(+). The catalysed reaction is decanal + NADP(+) = (2E)-decenal + NADPH + H(+). It carries out the reaction dodecanal + NADP(+) = (2E)-dodecenal + NADPH + H(+). It catalyses the reaction 4-hydroxynonanal + NADP(+) = (E)-4-hydroxynon-2-enal + NADPH + H(+). The enzyme catalyses pentan-2-one + NADP(+) = (E)-pent-3-en-2-one + NADPH + H(+). The catalysed reaction is nonan-2-one + NADP(+) = (3E)-nonen-2-one + NADPH + H(+). NAD(P)H-dependent oxidoreductase involved in metabolic inactivation of pro- and anti-inflammatory eicosanoids: prostaglandins (PG), leukotrienes (LT) and lipoxins (LX). Catalyzes with high efficiency the reduction of the 13,14 double bond of 15-oxoPGs, including 15-oxo-PGE1, 15-oxo-PGE2, 15-oxo-PGF1-alpha and 15-oxo-PGF2-alpha. Catalyzes with lower efficiency the oxidation of the hydroxyl group at C12 of LTB4 and its derivatives, converting them into biologically less active 12-oxo-LTB4 metabolites. Reduces 15-oxo-LXA4 to 13,14 dihydro-15-oxo-LXA4, enhancing neutrophil recruitment at the inflammatory site. May play a role in metabolic detoxification of alkenals and ketones. Reduces alpha,beta-unsaturated alkenals and ketones, particularly those with medium-chain length, showing highest affinity toward (2E)-decenal and (3E)-3-nonen-2-one. May inactivate 4-hydroxy-2-nonenal, a cytotoxic lipid constituent of oxidized low-density lipoprotein particles. The sequence is that of Prostaglandin reductase 1 (PTGR1) from Homo sapiens (Human).